The sequence spans 318 residues: NADH-ubiquinone oxidoreductase chain 1 (318 aa).

8 helical membrane passes run 3-23 (LINL…LTLL), 69-89 (MLFI…WTPL), 102-122 (MLFI…SGWA), 144-164 (VTLA…TLLS), 171-191 (YIWL…STLA), 222-242 (LFFL…IILF), 253-273 (ELYT…FLWI), and 294-314 (LPLT…LAGI).

The protein belongs to the complex I subunit 1 family. As to quaternary structure, core subunit of respiratory chain NADH dehydrogenase (Complex I) which is composed of 45 different subunits.

The protein localises to the mitochondrion inner membrane. The enzyme catalyses a ubiquinone + NADH + 5 H(+)(in) = a ubiquinol + NAD(+) + 4 H(+)(out). Functionally, core subunit of the mitochondrial membrane respiratory chain NADH dehydrogenase (Complex I) which catalyzes electron transfer from NADH through the respiratory chain, using ubiquinone as an electron acceptor. Essential for the catalytic activity and assembly of complex I. The polypeptide is NADH-ubiquinone oxidoreductase chain 1 (MT-ND1) (Murina florium (Flores tube-nosed bat)).